The chain runs to 370 residues: S-adenosylmethionine:tRNA ribosyltransferase-isomerase (370 aa).

This sequence belongs to the QueA family. As to quaternary structure, monomer.

It localises to the cytoplasm. It carries out the reaction 7-aminomethyl-7-carbaguanosine(34) in tRNA + S-adenosyl-L-methionine = epoxyqueuosine(34) in tRNA + adenine + L-methionine + 2 H(+). Its pathway is tRNA modification; tRNA-queuosine biosynthesis. Functionally, transfers and isomerizes the ribose moiety from AdoMet to the 7-aminomethyl group of 7-deazaguanine (preQ1-tRNA) to give epoxyqueuosine (oQ-tRNA). The sequence is that of S-adenosylmethionine:tRNA ribosyltransferase-isomerase from Prochlorococcus marinus (strain SARG / CCMP1375 / SS120).